The following is a 322-amino-acid chain: Lipoyl synthase (322 aa).

Residues 1-24 form a disordered region; the sequence is MVTVLDTVSKPRPRHPEKAHRPDQ. Positions 14-24 are enriched in basic and acidic residues; sequence RHPEKAHRPDQ. Cys59, Cys64, Cys70, Cys85, Cys89, Cys92, and Ser298 together coordinate [4Fe-4S] cluster. In terms of domain architecture, Radical SAM core spans 71-287; sequence WDKKHATFMI…ETIAYTKGFL (217 aa).

It belongs to the radical SAM superfamily. Lipoyl synthase family. The cofactor is [4Fe-4S] cluster.

The protein localises to the cytoplasm. It catalyses the reaction [[Fe-S] cluster scaffold protein carrying a second [4Fe-4S](2+) cluster] + N(6)-octanoyl-L-lysyl-[protein] + 2 oxidized [2Fe-2S]-[ferredoxin] + 2 S-adenosyl-L-methionine + 4 H(+) = [[Fe-S] cluster scaffold protein] + N(6)-[(R)-dihydrolipoyl]-L-lysyl-[protein] + 4 Fe(3+) + 2 hydrogen sulfide + 2 5'-deoxyadenosine + 2 L-methionine + 2 reduced [2Fe-2S]-[ferredoxin]. Its pathway is protein modification; protein lipoylation via endogenous pathway; protein N(6)-(lipoyl)lysine from octanoyl-[acyl-carrier-protein]: step 2/2. Catalyzes the radical-mediated insertion of two sulfur atoms into the C-6 and C-8 positions of the octanoyl moiety bound to the lipoyl domains of lipoate-dependent enzymes, thereby converting the octanoylated domains into lipoylated derivatives. The protein is Lipoyl synthase of Chelativorans sp. (strain BNC1).